Reading from the N-terminus, the 205-residue chain is Ribosomal RNA small subunit methyltransferase G 1 (205 aa).

S-adenosyl-L-methionine contacts are provided by residues glycine 77, leucine 82, 100–102 (EKS), 129–130 (LE), and arginine 138.

It belongs to the methyltransferase superfamily. RNA methyltransferase RsmG family.

It is found in the cytoplasm. It catalyses the reaction guanosine(527) in 16S rRNA + S-adenosyl-L-methionine = N(7)-methylguanosine(527) in 16S rRNA + S-adenosyl-L-homocysteine. Functionally, specifically methylates the N7 position of guanine in position 527 of 16S rRNA. This chain is Ribosomal RNA small subunit methyltransferase G 1, found in Bdellovibrio bacteriovorus (strain ATCC 15356 / DSM 50701 / NCIMB 9529 / HD100).